Reading from the N-terminus, the 153-residue chain is Deoxyuridine 5'-triphosphate nucleotidohydrolase (153 aa).

Substrate is bound by residues Arg71–Gly73, Asn84, Leu88–Asp90, and Met98.

The protein belongs to the dUTPase family. The cofactor is Mg(2+).

It catalyses the reaction dUTP + H2O = dUMP + diphosphate + H(+). Its pathway is pyrimidine metabolism; dUMP biosynthesis; dUMP from dCTP (dUTP route): step 2/2. In terms of biological role, this enzyme is involved in nucleotide metabolism: it produces dUMP, the immediate precursor of thymidine nucleotides and it decreases the intracellular concentration of dUTP so that uracil cannot be incorporated into DNA. The polypeptide is Deoxyuridine 5'-triphosphate nucleotidohydrolase (Wigglesworthia glossinidia brevipalpis).